A 599-amino-acid chain; its full sequence is Elongation factor 4 (599 aa).

The tr-type G domain occupies 2-184 (KNIRNFSIIA…RLVRDIPPPE (183 aa)). GTP contacts are provided by residues 14 to 19 (DHGKST) and 131 to 134 (NKID).

It belongs to the TRAFAC class translation factor GTPase superfamily. Classic translation factor GTPase family. LepA subfamily.

It is found in the cell inner membrane. The enzyme catalyses GTP + H2O = GDP + phosphate + H(+). Required for accurate and efficient protein synthesis under certain stress conditions. May act as a fidelity factor of the translation reaction, by catalyzing a one-codon backward translocation of tRNAs on improperly translocated ribosomes. Back-translocation proceeds from a post-translocation (POST) complex to a pre-translocation (PRE) complex, thus giving elongation factor G a second chance to translocate the tRNAs correctly. Binds to ribosomes in a GTP-dependent manner. In Klebsiella pneumoniae (strain 342), this protein is Elongation factor 4.